Reading from the N-terminus, the 139-residue chain is Putative pre-16S rRNA nuclease (139 aa).

The protein belongs to the YqgF nuclease family.

The protein resides in the cytoplasm. Could be a nuclease involved in processing of the 5'-end of pre-16S rRNA. This chain is Putative pre-16S rRNA nuclease, found in Haemophilus influenzae (strain PittEE).